Consider the following 406-residue polypeptide: Phosphoglycerate kinase (406 aa).

Residues 22 to 24 (DLN), Arg37, 60 to 63 (HLGN), Arg119, and Arg152 each bind substrate. Residues Lys202, Glu325, and 355–358 (GGDT) each bind ATP.

This sequence belongs to the phosphoglycerate kinase family. As to quaternary structure, monomer.

The protein localises to the cytoplasm. It catalyses the reaction (2R)-3-phosphoglycerate + ATP = (2R)-3-phospho-glyceroyl phosphate + ADP. It functions in the pathway carbohydrate degradation; glycolysis; pyruvate from D-glyceraldehyde 3-phosphate: step 2/5. In Orientia tsutsugamushi (strain Ikeda) (Rickettsia tsutsugamushi), this protein is Phosphoglycerate kinase.